Reading from the N-terminus, the 381-residue chain is Homoserine O-acetyltransferase (381 aa).

Residues 47 to 359 (NAILICHALT…DKGHDAFLLD (313 aa)) enclose the AB hydrolase-1 domain. S153 (nucleophile) is an active-site residue. Residue R223 coordinates substrate. Residues D320 and H353 contribute to the active site. Residue D354 coordinates substrate.

It belongs to the AB hydrolase superfamily. MetX family. In terms of assembly, homodimer.

The protein resides in the cytoplasm. The enzyme catalyses L-homoserine + acetyl-CoA = O-acetyl-L-homoserine + CoA. Its pathway is amino-acid biosynthesis; L-methionine biosynthesis via de novo pathway; O-acetyl-L-homoserine from L-homoserine: step 1/1. In terms of biological role, transfers an acetyl group from acetyl-CoA to L-homoserine, forming acetyl-L-homoserine. The chain is Homoserine O-acetyltransferase from Acidiphilium cryptum (strain JF-5).